The following is a 621-amino-acid chain: Putative DNA 3'-5' helicase Rad25 (621 aa).

The region spanning 268–417 is the Helicase ATP-binding domain; the sequence is VERFTEQGSG…EIFTLIGPPI (150 aa). 281–288 is a binding site for ATP; it reads GPPGSGKT. The short motif at 371–374 is the DEAH box element; sequence DEVH. Positions 441–465 are disordered; it reads PWGDETEQSEYSSTSGHDRRQAAAS. The Helicase C-terminal domain maps to 469 to 621; sequence KIDEIRYALA…EAVEPPAKTE (153 aa).

This sequence belongs to the helicase family. RAD25/XPB subfamily.

The enzyme catalyses Couples ATP hydrolysis with the unwinding of duplex DNA by translocating in the 3'-5' direction.. It carries out the reaction ATP + H2O = ADP + phosphate + H(+). The protein is Putative DNA 3'-5' helicase Rad25 of Haloarcula marismortui (strain ATCC 43049 / DSM 3752 / JCM 8966 / VKM B-1809) (Halobacterium marismortui).